Here is a 240-residue protein sequence, read N- to C-terminus: Ribonuclease 3 (240 aa).

Residues 13–143 (DHASLLEALG…LLGAVHLQHG (131 aa)) form the RNase III domain. Residue Glu-53 participates in Mg(2+) binding. Asp-57 is an active-site residue. Residues Asp-129 and Glu-132 each coordinate Mg(2+). Residue Glu-132 is part of the active site. The DRBM domain maps to 170-238 (DWKTSLQELT…AGAAYQALTA (69 aa)).

Belongs to the ribonuclease III family. As to quaternary structure, homodimer. Requires Mg(2+) as cofactor.

Its subcellular location is the cytoplasm. The enzyme catalyses Endonucleolytic cleavage to 5'-phosphomonoester.. Functionally, digests double-stranded RNA. Involved in the processing of primary rRNA transcript to yield the immediate precursors to the large and small rRNAs (23S and 16S). Processes some mRNAs, and tRNAs when they are encoded in the rRNA operon. Processes pre-crRNA and tracrRNA of type II CRISPR loci if present in the organism. In Nocardia farcinica (strain IFM 10152), this protein is Ribonuclease 3.